A 339-amino-acid polypeptide reads, in one-letter code: Terpene synthase 9 (339 aa).

The DDxx(x)D/E motif motif lies at 79–84 (DDFLES). Positions 219–227 (NDCASYAKE) match the NDxxSxxxD/E motif motif.

It belongs to the terpene synthase family.

It catalyses the reaction (2E,6E)-farnesyl diphosphate = (-)-beta-barbatene + diphosphate. The catalysed reaction is (2E,6E)-farnesyl diphosphate = (E)-beta-farnesene + diphosphate. It carries out the reaction (2E)-geranyl diphosphate = (Z)-beta-ocimene + diphosphate. The enzyme catalyses (2E)-geranyl diphosphate + H2O = linalool + diphosphate. It catalyses the reaction (2E)-geranyl diphosphate = beta-myrcene + diphosphate. Terpene synthase that converts its substrate farnesyl diphosphate (FPP) into the sesquiterpene beta-barbatene as a major product as well as (E)-beta-farnesene as a minor product. Is also able to convert geranyl diphosphate (GPP) into a mixture of monoterpenes including (Z)-beta-ocimene, linalool, beta-myrcene, limonene and alpha-terpineol. The chain is Terpene synthase 9 from Dictyostelium discoideum (Social amoeba).